The chain runs to 140 residues: HTH-type transcriptional regulator LysM (140 aa).

An HTH asnC-type domain is found at V4–V67. The segment at residues Y23–E42 is a DNA-binding region (H-T-H motif).

In terms of assembly, homotetramer.

Its subcellular location is the cytoplasm. It functions in the pathway amino-acid biosynthesis; L-lysine biosynthesis via AAA pathway [regulation]. In terms of biological role, in the absence or at low concentrations of lysine, activates the biosynthesis of this amino acid via the alpha-aminoadipate (AAA) pathway. This Sulfurisphaera tokodaii (strain DSM 16993 / JCM 10545 / NBRC 100140 / 7) (Sulfolobus tokodaii) protein is HTH-type transcriptional regulator LysM (lysM).